Consider the following 833-residue polypeptide: Phenylalanine--tRNA ligase beta subunit (833 aa).

The tRNA-binding domain occupies 42–157 (ADLKGPLAVG…PEYEVGTDAI (116 aa)). A B5 domain is found at 411-485 (SAPHTITIPA…RLEGYENLPS (75 aa)). 4 residues coordinate Mg(2+): D463, D469, E472, and E473. The FDX-ACB domain occupies 739 to 832 (STFPVATQDV…AAERTGAALR (94 aa)).

This sequence belongs to the phenylalanyl-tRNA synthetase beta subunit family. Type 1 subfamily. Tetramer of two alpha and two beta subunits. Mg(2+) serves as cofactor.

The protein localises to the cytoplasm. The enzyme catalyses tRNA(Phe) + L-phenylalanine + ATP = L-phenylalanyl-tRNA(Phe) + AMP + diphosphate + H(+). This is Phenylalanine--tRNA ligase beta subunit from Streptomyces avermitilis (strain ATCC 31267 / DSM 46492 / JCM 5070 / NBRC 14893 / NCIMB 12804 / NRRL 8165 / MA-4680).